A 130-amino-acid chain; its full sequence is Anti-adapter protein IraD (130 aa).

It belongs to the GpW/Gp25 family. IraD subfamily. Interacts with RssB.

It localises to the cytoplasm. In terms of biological role, inhibits RpoS proteolysis by regulating RssB activity, thereby increasing the stability of the sigma stress factor RpoS during oxidative stress. Its effect on RpoS stability is due to its interaction with RssB, which probably blocks the interaction of RssB with RpoS, and the consequent delivery of the RssB-RpoS complex to the ClpXP protein degradation pathway. The sequence is that of Anti-adapter protein IraD from Escherichia coli (strain K12 / MC4100 / BW2952).